Here is a 302-residue protein sequence, read N- to C-terminus: Sodium/potassium-transporting ATPase subunit beta-233 (302 aa).

The Cytoplasmic segment spans residues 1–30 (MSGNKDSDGGWKTFIWNSEKKELLGRTGCS). The chain crosses the membrane as a helical; Signal-anchor for type II membrane protein span at residues 31–51 (WFKILLFYVIFYGCLAAVFVG). Residues 52 to 302 (TIQALLLTLS…FDIKITVNDS (251 aa)) are Extracellular-facing. Cystine bridges form between cysteine 125–cysteine 148 and cysteine 158–cysteine 174. Asparagine 193 and asparagine 263 each carry an N-linked (GlcNAc...) asparagine glycan. An intrachain disulfide couples cysteine 213 to cysteine 274.

This sequence belongs to the X(+)/potassium ATPases subunit beta family. As to quaternary structure, the sodium/potassium-transporting ATPase is composed of a catalytic alpha subunit, an auxiliary non-catalytic beta subunit and an additional regulatory subunit. Glycosylated. As to expression, expressed mainly in epithelial tissues.

Its subcellular location is the cell membrane. In terms of biological role, this is the non-catalytic component of the active enzyme, which catalyzes the hydrolysis of ATP coupled with the exchange of Na(+) and K(+) ions across the plasma membrane. The beta subunit regulates, through assembly of alpha/beta heterodimers, the number of sodium pumps transported to the plasma membrane. The protein is Sodium/potassium-transporting ATPase subunit beta-233 of Anguilla anguilla (European freshwater eel).